A 121-amino-acid chain; its full sequence is UPF0102 protein AAur_2443 (121 aa).

It belongs to the UPF0102 family.

The polypeptide is UPF0102 protein AAur_2443 (Paenarthrobacter aurescens (strain TC1)).